Here is a 71-residue protein sequence, read N- to C-terminus: Protein bdm (71 aa).

This Escherichia coli (strain K12) protein is Protein bdm (bdm).